A 449-amino-acid polypeptide reads, in one-letter code: Glucose-6-phosphate isomerase (449 aa).

Catalysis depends on glutamate 291, which acts as the Proton donor. Active-site residues include histidine 312 and lysine 426.

The protein belongs to the GPI family.

The protein localises to the cytoplasm. The catalysed reaction is alpha-D-glucose 6-phosphate = beta-D-fructose 6-phosphate. It functions in the pathway carbohydrate biosynthesis; gluconeogenesis. It participates in carbohydrate degradation; glycolysis; D-glyceraldehyde 3-phosphate and glycerone phosphate from D-glucose: step 2/4. Catalyzes the reversible isomerization of glucose-6-phosphate to fructose-6-phosphate. This chain is Glucose-6-phosphate isomerase, found in Streptococcus pneumoniae serotype 4 (strain ATCC BAA-334 / TIGR4).